The chain runs to 173 residues: MDIEKVNSMDLGEFVDVFGNATERCPLIAAAVWSQRPFSDLEDLEKHFFAFIDALAQSGQEGILRCHPDLAGSELQRGTLTAESQREQSGAGLRSLGADERLRLAELNAQYRARFGFPFVLAARFSDRTAVPRELARRLLCPSAQELRTALGEVKKIGSLRLADLLRADPAKL.

His67 functions as the Proton donor in the catalytic mechanism. Substrate is bound by residues Pro68, Ser84–Gln88, and Phe119–Ala123. Residues Ala171 to Leu173 carry the Microbody targeting signal motif.

It belongs to the OHCU decarboxylase family. In terms of tissue distribution, apparently not expressed.

It localises to the peroxisome. The catalysed reaction is 5-hydroxy-2-oxo-4-ureido-2,5-dihydro-1H-imidazole-5-carboxylate + H(+) = (S)-allantoin + CO2. It functions in the pathway purine metabolism; urate degradation; (S)-allantoin from urate: step 3/3. Its function is as follows. Catalyzes the stereoselective decarboxylation of 2-oxo-4-hydroxy-4-carboxy-5-ureidoimidazoline (OHCU) to (S)-allantoin. The protein is Putative 2-oxo-4-hydroxy-4-carboxy-5-ureidoimidazoline decarboxylase (URAD) of Homo sapiens (Human).